The primary structure comprises 324 residues: Rho crystallin (324 aa).

Position 2 is an N-acetylthreonine (Thr-2). Residue 218 to 281 coordinates NADP(+); sequence SVLGSHRDRN…SFTPARIKQN (64 aa).

It belongs to the aldo/keto reductase family. As to quaternary structure, monomer.

This chain is Rho crystallin, found in Aquarana catesbeiana (American bullfrog).